The following is a 540-amino-acid chain: Sterol 14-alpha demethylase (540 aa).

The helical transmembrane segment at 41–61 threads the bilayer; it reads PLFLVSGFLGVCVAYAVANII. Position 485 (Cys-485) interacts with heme.

This sequence belongs to the cytochrome P450 family. Requires heme as cofactor.

It localises to the membrane. The enzyme catalyses a 14alpha-methyl steroid + 3 reduced [NADPH--hemoprotein reductase] + 3 O2 = a Delta(14) steroid + formate + 3 oxidized [NADPH--hemoprotein reductase] + 4 H2O + 4 H(+). It carries out the reaction a 14alpha-methyl steroid + reduced [NADPH--hemoprotein reductase] + O2 = a 14alpha-hydroxymethyl steroid + oxidized [NADPH--hemoprotein reductase] + H2O + H(+). It catalyses the reaction a 14alpha-hydroxymethyl steroid + reduced [NADPH--hemoprotein reductase] + O2 = a 14alpha-formyl steroid + oxidized [NADPH--hemoprotein reductase] + 2 H2O + H(+). The catalysed reaction is a 14alpha-formyl steroid + reduced [NADPH--hemoprotein reductase] + O2 = a Delta(14) steroid + formate + oxidized [NADPH--hemoprotein reductase] + H2O + 2 H(+). The enzyme catalyses lanosterol + 3 reduced [NADPH--hemoprotein reductase] + 3 O2 = 4,4-dimethyl-5alpha-cholesta-8,14,24-trien-3beta-ol + formate + 3 oxidized [NADPH--hemoprotein reductase] + 4 H2O + 4 H(+). It carries out the reaction lanosterol + reduced [NADPH--hemoprotein reductase] + O2 = 32-hydroxylanosterol + oxidized [NADPH--hemoprotein reductase] + H2O + H(+). It catalyses the reaction 32-hydroxylanosterol + reduced [NADPH--hemoprotein reductase] + O2 = 32-oxolanosterol + oxidized [NADPH--hemoprotein reductase] + 2 H2O + H(+). The catalysed reaction is 32-oxolanosterol + reduced [NADPH--hemoprotein reductase] + O2 = 4,4-dimethyl-5alpha-cholesta-8,14,24-trien-3beta-ol + formate + oxidized [NADPH--hemoprotein reductase] + H2O + 2 H(+). The enzyme catalyses eburicol + 3 reduced [NADPH--hemoprotein reductase] + 3 O2 = 14-demethyleburicol + formate + 3 oxidized [NADPH--hemoprotein reductase] + 4 H2O + 4 H(+). It carries out the reaction eburicol + reduced [NADPH--hemoprotein reductase] + O2 = 32-hydroxyeburicol + oxidized [NADPH--hemoprotein reductase] + H2O + H(+). It catalyses the reaction 32-hydroxyeburicol + reduced [NADPH--hemoprotein reductase] + O2 = 32-oxoeburicol + oxidized [NADPH--hemoprotein reductase] + 2 H2O + H(+). The catalysed reaction is 32-oxoeburicol + reduced [NADPH--hemoprotein reductase] + O2 = 14-demethyleburicol + formate + oxidized [NADPH--hemoprotein reductase] + H2O + 2 H(+). It functions in the pathway steroid biosynthesis; sterol biosynthesis. Its function is as follows. Sterol 14-alpha demethylase; part of the gene cluster that mediates the biosynthesis of tetrahydropyranyl antifungal agent lanomycin that acts as an inhibitor of CYP51 and blocks the ergosterol biosynthesis. Sterol 14-alpha-demethylase plays a critical role in the biosynthesis of ergosterol, the major sterol component in fungal membranes that participates in a variety of functions. Acts as a self-resistant CYP51 that contains mutations found in CYP51s isolated from azole resistance strains and that is not inhibited by the final product of the cluster, lanomycin. In Pyrenophora dematioidea (Helminthosporium dematioideum), this protein is Sterol 14-alpha demethylase.